The chain runs to 184 residues: Protein GrpE (184 aa).

Residues 1 to 24 (MADEQLDEKNLNSEEAGAVNGDAR) form a disordered region.

Belongs to the GrpE family. In terms of assembly, homodimer.

Its subcellular location is the cytoplasm. In terms of biological role, participates actively in the response to hyperosmotic and heat shock by preventing the aggregation of stress-denatured proteins, in association with DnaK and GrpE. It is the nucleotide exchange factor for DnaK and may function as a thermosensor. Unfolded proteins bind initially to DnaJ; upon interaction with the DnaJ-bound protein, DnaK hydrolyzes its bound ATP, resulting in the formation of a stable complex. GrpE releases ADP from DnaK; ATP binding to DnaK triggers the release of the substrate protein, thus completing the reaction cycle. Several rounds of ATP-dependent interactions between DnaJ, DnaK and GrpE are required for fully efficient folding. The chain is Protein GrpE from Pseudomonas entomophila (strain L48).